A 119-amino-acid chain; its full sequence is U-scoloptoxin(01)-Cw1a (119 aa).

Residues 1-22 form the signal peptide; it reads MSKATNFYLFVLLGVFVALVRT. Positions 38–96 constitute a Chitin-binding type-2 domain; the sequence is SFSCDGKKPGYYADQQMECQVYHVCTPDNEHAVLLCGPGTIFNQKHLVCDFPSNYACAD. A disulfide bridge connects residues Cys73 and Cys86.

The protein belongs to the scoloptoxin-01 family. Contains 3 disulfide bonds. As to expression, expressed by the venom gland.

Its subcellular location is the secreted. The polypeptide is U-scoloptoxin(01)-Cw1a (Cormocephalus westwoodi (Westwood's green centipede)).